A 624-amino-acid polypeptide reads, in one-letter code: Multicopper oxidase elcG (624 aa).

The first 18 residues, 1–18 (MACNILNFLTGLLSLSST), serve as a signal peptide directing secretion. 2 consecutive Plastocyanin-like domains span residues 48 to 160 (PGRA…IERG) and 216 to 373 (CMDA…TIRI). N-linked (GlcNAc...) asparagine glycosylation occurs at asparagine 65. Residues histidine 96, histidine 98, histidine 140, and histidine 142 each coordinate Cu cation. 3 N-linked (GlcNAc...) asparagine glycosylation sites follow: asparagine 271, asparagine 296, and asparagine 464. Residues 474–603 (FLFQDPSQIE…GGMGVVILDG (130 aa)) enclose the Plastocyanin-like 3 domain. Cu cation contacts are provided by histidine 511, histidine 514, histidine 516, histidine 585, cysteine 586, histidine 587, and histidine 591.

It belongs to the multicopper oxidase family.

It participates in secondary metabolite biosynthesis. Multicopper oxidase; part of the gene cluster that mediates the biosynthesis of elsinochrome C, a perelyenequinone phytotoxin structurally similar to cercosporin. The first step of elsinochrome C biosynthesis is performed by the polyketide synthase elcA which catalyzes the formation of nor-toralactone. The starter unit acyltransferase (SAT) domain of elcA initiates polyketide extension by the selective utilization of acetyl-CoA, which is elongated to the heptaketide in the beta-ketoacyl synthase (KS) domain by successive condensations with six malonyl units introduced by the malonyl acyltransferase (MAT) domain. The product template (PT) domain catalyzes C4-C9 and C2-C11 aldol cyclizations and dehydrations to a trihydroxynaphthalene, which is thought to be delivered to the thioesterase (TE) domain for product release. The bifunctional enzyme elcB then methylates nor-toralactone to toralactone before conducting an unusual oxidative aromatic ring opening. The next step in perylenequinone biosynthesis is an O-methylation at the nascent OH-6 of the elcB product performed by the O-methyltransferase elcD. The oxidative coupling of the two monomeric naphthol units in perylenequinone biosynthesis is catalyzed by the FAD-dependent monooxygenase elcE and the multicopper oxidase elcG. ElcG might catalyze the first intermolecular coupling in a regio- and stereo-selective manner via a phenol radical coupling mechanism and the elcE could forge the second C-C bond intramolecularly via a hydride transfer mechanism. The fasciclin domain-containing protein elcF might also play a role duting this step. The last piece of the puzzle in the biosynthesis of elsinochrome C is the additional annulation by enolate coupling to afford the dihydrobenzo(ghi)perylenequinone system, catalyzed by the FAD-dependent monooxygenase elcH. This chain is Multicopper oxidase elcG, found in Phaeosphaeria nodorum (strain SN15 / ATCC MYA-4574 / FGSC 10173) (Glume blotch fungus).